The following is a 661-amino-acid chain: MKDRFELVSNYQPQGDQPKAIDQLVKGINEGRKHQTLLGATGTGKTFTMSNVIKEVNKPTLVIAHNKTLAGQLYSEFKEFFPNNAVEYFVSYYDYYQPEAYVPQTDTFIEKDASINDEIDKLRHSATSALFERKDVIIVASVSCIYGLGSPEEYREMVLSLRTEMEIERNELLRKLVDIQYARNDIDFQRGTFRVRGDVVEIFPASRDEHCVRVEFFGDEIERIREVDALTGEILGEREHVAIFPASHFVTREEKMKKAIINIEEELEERLKALREEGKLLEAQRLEQRTRYDLEMMREMGFCSGIENYSRHLTLRPAGSTPYTLLDYFPDDFLMVIDESHVTIPQIRGMYNGDQARKQVLVDHGFRLPSALDNRPLRFEEFEKHIHNIVYVSATPGPYELEHTPEMVEQIIRPTGLLDPIIEVRPIEGQIDDLIGEIQQRIERNERVLVTTLTKKMSEDLTDYLKEIGIKVTYLHSEIKTLERIEIIRDLRLGKHDVLVGINLLREGLDIPEVSLVAILDADKEGFLRSERSLIQTIGRAARNAEGRVIMYADKITNSMEIAINETKRRREQQEAYNEKHGITPKTINKKIRDVIRATHAAEDQEEYQVKEEPKLSKMTKKEREKVIAQMESDMKEAAKALDFERAAELRDLLLELKSEG.

A Helicase ATP-binding domain is found at 26 to 413 (KGINEGRKHQ…TPEMVEQIIR (388 aa)). Residue 39-46 (GATGTGKT) participates in ATP binding. Residues 92–115 (YYDYYQPEAYVPQTDTFIEKDASI) carry the Beta-hairpin motif. Residues 430-596 (QIDDLIGEIQ…TINKKIRDVI (167 aa)) enclose the Helicase C-terminal domain. The UVR domain maps to 625–660 (EKVIAQMESDMKEAAKALDFERAAELRDLLLELKSE).

This sequence belongs to the UvrB family. As to quaternary structure, forms a heterotetramer with UvrA during the search for lesions. Interacts with UvrC in an incision complex.

The protein resides in the cytoplasm. Functionally, the UvrABC repair system catalyzes the recognition and processing of DNA lesions. A damage recognition complex composed of 2 UvrA and 2 UvrB subunits scans DNA for abnormalities. Upon binding of the UvrA(2)B(2) complex to a putative damaged site, the DNA wraps around one UvrB monomer. DNA wrap is dependent on ATP binding by UvrB and probably causes local melting of the DNA helix, facilitating insertion of UvrB beta-hairpin between the DNA strands. Then UvrB probes one DNA strand for the presence of a lesion. If a lesion is found the UvrA subunits dissociate and the UvrB-DNA preincision complex is formed. This complex is subsequently bound by UvrC and the second UvrB is released. If no lesion is found, the DNA wraps around the other UvrB subunit that will check the other stand for damage. The polypeptide is UvrABC system protein B (Bacillus licheniformis (strain ATCC 14580 / DSM 13 / JCM 2505 / CCUG 7422 / NBRC 12200 / NCIMB 9375 / NCTC 10341 / NRRL NRS-1264 / Gibson 46)).